Reading from the N-terminus, the 274-residue chain is Glutamate--cysteine ligase regulatory subunit (274 aa).

A Phosphoserine modification is found at S59. Position 263 is an N6-acetyllysine (K263).

Belongs to the aldo/keto reductase family. Glutamate--cysteine ligase light chain subfamily. Heterodimer of a catalytic heavy chain and a regulatory light chain.

Its pathway is sulfur metabolism; glutathione biosynthesis; glutathione from L-cysteine and L-glutamate: step 1/2. The protein is Glutamate--cysteine ligase regulatory subunit (Gclm) of Mus musculus (Mouse).